Here is a 61-residue protein sequence, read N- to C-terminus: Metallothionein-1E (61 aa).

At methionine 1 the chain carries N-acetylmethionine. Positions 1–29 are beta; it reads MDPNCSCPTGGSCSCAGSCTCKACRCTSC. The a divalent metal cation site is built by cysteine 5, cysteine 7, cysteine 13, cysteine 15, cysteine 19, cysteine 21, cysteine 24, cysteine 26, cysteine 29, cysteine 33, cysteine 34, cysteine 36, cysteine 37, cysteine 41, cysteine 44, cysteine 48, cysteine 50, cysteine 57, cysteine 59, and cysteine 60. The interval 30-61 is alpha; sequence KKSCCSCCPVGCAKCAQGCICKGASDKCSCCA.

It belongs to the metallothionein superfamily. Type 1 family. In terms of assembly, monomer.

Its function is as follows. Metallothioneins have a high content of cysteine residues that bind various heavy metals; these proteins are transcriptionally regulated by both heavy metals and glucocorticoids. In Sus scrofa (Pig), this protein is Metallothionein-1E (MT1E).